A 344-amino-acid polypeptide reads, in one-letter code: Chorismatase (344 aa).

Substrate-binding residues include tyrosine 155, arginine 162, tyrosine 215, and arginine 228. Catalysis depends on glutamate 338, which acts as the Proton acceptor.

The protein belongs to the FkbO/Hyg5 family. In terms of assembly, monomer.

The enzyme catalyses chorismate + H2O = (3R,4R)-3,4-dihydroxy-3,4-dihydrobenzoate + pyruvate. Its activity is regulated as follows. Competitively inhibited by 3-(2-carboxyethyl)benzoate. Its function is as follows. Involved in the biosynthesis of the macrocyclic amino acid-linked polyketides FK506 and FK520 which are potent immunosuppressants that prevent T-cell proliferation through initial binding to the immunophilin FKBP12. Catalyzes the hydrolysis of chorismate via a 1,4-conjugate elimination of water to yield (4R,5R)-4,5-dihydroxycyclohexa-1,5-dienecarboxylic acid (DCDC). The polypeptide is Chorismatase (fkbO) (Streptomyces hygroscopicus).